A 433-amino-acid polypeptide reads, in one-letter code: O-methyltransferase VdtC (433 aa).

D284 contributes to the S-adenosyl-L-methionine binding site. H335 (proton acceptor) is an active-site residue.

This sequence belongs to the class I-like SAM-binding methyltransferase superfamily. Cation-independent O-methyltransferase family. COMT subfamily.

The enzyme catalyses 7,9,10-trihydroxy-3-(2-oxopropyl)-1H-benzo[g]isochromen-1-one + S-adenosyl-L-methionine = 9,10-dihydroxy-7-methoxy-3-(2-oxopropyl)-1H-benzo[g]isochromen-1-one + S-adenosyl-L-homocysteine + H(+). It participates in secondary metabolite biosynthesis. Functionally, O-methyltransferase; part of the gene cluster that mediates the biosynthesis of viriditoxin, one of the 'classical' secondary metabolites produced by fungi and that has antibacterial activity. The first step is performed by the polyketide synthase VdtA which condenses one acetyl-CoA and 6 malonyl-CoA units to form the heptaketide monomer backbone of viriditoxin. The product of VdtA is then O-methylated on C7 by the O-methyltransferase VdtC. The O-methyl group is important for the stereoselective coupling of the monomers at the final step of viriditoxin biosynthesis. The short-chain dehydrogenase/reductase VdtF then acts as a stereospecific reductase converting the pyrone to dihydropyrone via the reduction of the C3-C4 double bond. The FAD-binding monooxygenase VdtE then converts the ketone group into a methyl-ester group to yield semi-viriditoxin. Finally, the laccase VdtB is involved in dimerization of 2 semi-viriditoxin molecules to yield the final viriditoxin. VdtB is responsible for the regioselective 6,6'-coupling of semi-viriditoxin, which yields (M)-viriditoxin and (P)-viriditoxin at a ratio of 1:2. The non-catalytic carboxylesterase-like protein VdtD affects the stereochemistical outcome of the coupling. The highly reducing polyketide synthase VdtX is not involved in viriditoxin synthesis, but might possibly play a role in the production of additional metabolites not identified yet. The polypeptide is O-methyltransferase VdtC (Byssochlamys spectabilis (Paecilomyces variotii)).